A 399-amino-acid chain; its full sequence is NADH-quinone oxidoreductase subunit D 2 (399 aa).

The disordered stretch occupies residues 1–20 (MIASKESNSAATPATSAPTL). Over residues 9-20 (SAATPATSAPTL) the composition is skewed to low complexity.

The protein belongs to the complex I 49 kDa subunit family. As to quaternary structure, NDH-1 is composed of 14 different subunits. Subunits NuoB, C, D, E, F, and G constitute the peripheral sector of the complex.

Its subcellular location is the cell inner membrane. The enzyme catalyses a quinone + NADH + 5 H(+)(in) = a quinol + NAD(+) + 4 H(+)(out). NDH-1 shuttles electrons from NADH, via FMN and iron-sulfur (Fe-S) centers, to quinones in the respiratory chain. The immediate electron acceptor for the enzyme in this species is believed to be ubiquinone. Couples the redox reaction to proton translocation (for every two electrons transferred, four hydrogen ions are translocated across the cytoplasmic membrane), and thus conserves the redox energy in a proton gradient. The polypeptide is NADH-quinone oxidoreductase subunit D 2 (Opitutus terrae (strain DSM 11246 / JCM 15787 / PB90-1)).